Reading from the N-terminus, the 291-residue chain is Aliphatic sulfonates import ATP-binding protein SsuB 2 (291 aa).

In terms of domain architecture, ABC transporter spans L26–I247. G58–S65 lines the ATP pocket. The disordered stretch occupies residues P264 to L291. The span at A281–L291 shows a compositional bias: polar residues.

Belongs to the ABC transporter superfamily. Aliphatic sulfonates importer (TC 3.A.1.17.2) family. As to quaternary structure, the complex is composed of two ATP-binding proteins (SsuB), two transmembrane proteins (SsuC) and a solute-binding protein (SsuA).

It is found in the cell inner membrane. It catalyses the reaction ATP + H2O + aliphatic sulfonate-[sulfonate-binding protein]Side 1 = ADP + phosphate + aliphatic sulfonateSide 2 + [sulfonate-binding protein]Side 1.. Its function is as follows. Part of the ABC transporter complex SsuABC involved in aliphatic sulfonates import. Responsible for energy coupling to the transport system. The protein is Aliphatic sulfonates import ATP-binding protein SsuB 2 of Xanthomonas axonopodis pv. citri (strain 306).